We begin with the raw amino-acid sequence, 186 residues long: Imidazoleglycerol-phosphate dehydratase (186 aa).

The protein belongs to the imidazoleglycerol-phosphate dehydratase family.

It localises to the cytoplasm. It catalyses the reaction D-erythro-1-(imidazol-4-yl)glycerol 3-phosphate = 3-(imidazol-4-yl)-2-oxopropyl phosphate + H2O. It functions in the pathway amino-acid biosynthesis; L-histidine biosynthesis; L-histidine from 5-phospho-alpha-D-ribose 1-diphosphate: step 6/9. This is Imidazoleglycerol-phosphate dehydratase from Pyrobaculum aerophilum (strain ATCC 51768 / DSM 7523 / JCM 9630 / CIP 104966 / NBRC 100827 / IM2).